The primary structure comprises 254 residues: Imidazole glycerol phosphate synthase subunit HisF (254 aa).

Residues D11 and D130 contribute to the active site.

Belongs to the HisA/HisF family. Heterodimer of HisH and HisF.

The protein localises to the cytoplasm. The catalysed reaction is 5-[(5-phospho-1-deoxy-D-ribulos-1-ylimino)methylamino]-1-(5-phospho-beta-D-ribosyl)imidazole-4-carboxamide + L-glutamine = D-erythro-1-(imidazol-4-yl)glycerol 3-phosphate + 5-amino-1-(5-phospho-beta-D-ribosyl)imidazole-4-carboxamide + L-glutamate + H(+). Its pathway is amino-acid biosynthesis; L-histidine biosynthesis; L-histidine from 5-phospho-alpha-D-ribose 1-diphosphate: step 5/9. IGPS catalyzes the conversion of PRFAR and glutamine to IGP, AICAR and glutamate. The HisF subunit catalyzes the cyclization activity that produces IGP and AICAR from PRFAR using the ammonia provided by the HisH subunit. The chain is Imidazole glycerol phosphate synthase subunit HisF from Staphylococcus carnosus (strain TM300).